A 258-amino-acid chain; its full sequence is Small ribosomal subunit protein uS2 (258 aa).

Residues 226–258 (AQNKDVEPVADKDEKPEAAPVDEAETATETTGE) are disordered. Basic and acidic residues predominate over residues 229–242 (KDVEPVADKDEKPE). Positions 245 to 258 (PVDEAETATETTGE) are enriched in acidic residues.

The protein belongs to the universal ribosomal protein uS2 family.

The protein is Small ribosomal subunit protein uS2 of Solidesulfovibrio magneticus (strain ATCC 700980 / DSM 13731 / RS-1) (Desulfovibrio magneticus).